We begin with the raw amino-acid sequence, 390 residues long: Heat stress transcription factor B-2b (390 aa).

Positions Thr165 to Asn212 are disordered. The stretch at Gly206–Leu237 forms a coiled coil. A hydrophobic repeat HR-A/B region spans residues Leu215–Ala244. Positions Arg318–Arg322 match the Nuclear localization signal motif. The interval Arg322–Arg363 is disordered. Residues His323–Gln350 show a composition bias toward basic and acidic residues.

This sequence belongs to the HSF family. Class B subfamily. As to quaternary structure, homotrimer. In terms of processing, exhibits temperature-dependent phosphorylation.

The protein localises to the nucleus. Transcriptional regulator that specifically binds DNA of heat shock promoter elements (HSE). This is Heat stress transcription factor B-2b (HSFB2B) from Oryza sativa subsp. japonica (Rice).